Consider the following 179-residue polypeptide: B-cell acute lymphoblastic leukemia-expressed protein (179 aa).

Disordered stretches follow at residues 1 to 20 and 65 to 86; these read MMKDIIPASSWASEESTDLQ and RDTPPPVTSPRGDGICVSRGKA. The segment covering 10–20 has biased composition (polar residues); it reads SWASEESTDLQ.

In Homo sapiens (Human), this protein is B-cell acute lymphoblastic leukemia-expressed protein (BLACE).